The following is a 392-amino-acid chain: ABSCISIC ACID-INSENSITIVE 5-like protein 4 (392 aa).

Positions 1 to 22 are disordered; sequence MGTHIDINNLGGDTSRGNESKP. 3 positions are modified to phosphoserine: Ser-28, Ser-50, and Ser-96. Thr-135 carries the post-translational modification Phosphothreonine. Residues 266–297 are disordered; it reads NMGGAGGTVTATSPGTSSAENNTWSSPVPYVF. Over residues 274–291 the composition is skewed to polar residues; sequence VTATSPGTSSAENNTWSS. The bZIP domain maps to 311–374; that stretch reads VERRQKRMIK…NSELKEFSKQ (64 aa). The tract at residues 313–332 is basic motif; the sequence is RRQKRMIKNRESAARSRARK. The interval 339 to 360 is leucine-zipper; sequence LEAEIESLKLVNQDLQKKQAEI.

Belongs to the bZIP family. ABI5 subfamily. DNA-binding heterodimer. Interacts with ABI3 and the AFP proteins AFP1, AFP2, AFP3 and AFP4. Phosphorylated by CPK4, CPK11, SRK2D and SRK2I in vitro.

It localises to the nucleus. In terms of biological role, binds to the ABA-responsive element (ABRE). Could participate in abscisic acid-regulated gene expression. This Arabidopsis thaliana (Mouse-ear cress) protein is ABSCISIC ACID-INSENSITIVE 5-like protein 4 (ABF1).